The sequence spans 829 residues: Periplasmic nitrate reductase (829 aa).

The tat-type signal signal peptide spans 1–30 (MKLSRRDFMKANAVAAAAAVAGVSAPTLAA). One can recognise a 4Fe-4S Mo/W bis-MGD-type domain in the interval 41–97 (IKWDKAPCRFCGTGCSVLVGSQDGRVVATQGDPDAPVNRGLNCIKGYFLSKIMYGED). 4 residues coordinate [4Fe-4S] cluster: cysteine 48, cysteine 51, cysteine 55, and cysteine 83. Mo-bis(molybdopterin guanine dinucleotide) is bound by residues lysine 85, glutamine 152, asparagine 177, cysteine 181, 214 to 221 (WGSNMAEM), 245 to 249 (STFEH), 264 to 266 (QTD), methionine 374, glutamine 378, asparagine 484, 510 to 511 (SD), lysine 533, aspartate 560, and 719 to 728 (TGRVLEHWHT). Phenylalanine 795 serves as a coordination point for substrate. Mo-bis(molybdopterin guanine dinucleotide) is bound by residues asparagine 803 and lysine 820.

Belongs to the prokaryotic molybdopterin-containing oxidoreductase family. NasA/NapA/NarB subfamily. As to quaternary structure, component of the periplasmic nitrate reductase NapAB complex composed of NapA and NapB. [4Fe-4S] cluster is required as a cofactor. The cofactor is Mo-bis(molybdopterin guanine dinucleotide). Predicted to be exported by the Tat system. The position of the signal peptide cleavage has not been experimentally proven.

The protein localises to the periplasm. It carries out the reaction 2 Fe(II)-[cytochrome] + nitrate + 2 H(+) = 2 Fe(III)-[cytochrome] + nitrite + H2O. In terms of biological role, catalytic subunit of the periplasmic nitrate reductase complex NapAB. Receives electrons from NapB and catalyzes the reduction of nitrate to nitrite. This Aeromonas salmonicida (strain A449) protein is Periplasmic nitrate reductase.